Reading from the N-terminus, the 122-residue chain is MRHYEIVFIVHPDQSEQVPAMVERYKTMIAEANGKIHRLEDWGRRQLAYPINKIHKAHYVLMNIETTPEVVEELETAFRFNDAILRHLTIKTKHAVTEASPMLGGEKAKNLLSGASEEAVAQ.

The protein belongs to the bacterial ribosomal protein bS6 family.

In terms of biological role, binds together with bS18 to 16S ribosomal RNA. This is Small ribosomal subunit protein bS6 (rpsF) from Neisseria meningitidis serogroup B (strain ATCC BAA-335 / MC58).